Consider the following 386-residue polypeptide: DNA replication and repair protein RecF (386 aa).

ATP is bound at residue 30–37; sequence GSNGFGKT.

It belongs to the RecF family.

Its subcellular location is the cytoplasm. The RecF protein is involved in DNA metabolism; it is required for DNA replication and normal SOS inducibility. RecF binds preferentially to single-stranded, linear DNA. It also seems to bind ATP. In Mycolicibacterium vanbaalenii (strain DSM 7251 / JCM 13017 / BCRC 16820 / KCTC 9966 / NRRL B-24157 / PYR-1) (Mycobacterium vanbaalenii), this protein is DNA replication and repair protein RecF.